The primary structure comprises 373 residues: Bifunctional enzyme IspD/IspF (373 aa).

Residues 1 to 212 (MPDITLILLG…PCIEAPSGKT (212 aa)) form a 2-C-methyl-D-erythritol 4-phosphate cytidylyltransferase region. A 2-C-methyl-D-erythritol 2,4-cyclodiphosphate synthase region spans residues 213 to 373 (LTGFGLDIHP…NLTYYNWKQK (161 aa)). A divalent metal cation contacts are provided by D219 and H221. Residues 219-221 (DIH) and 245-246 (HS) contribute to the 4-CDP-2-C-methyl-D-erythritol 2-phosphate site. H253 provides a ligand contact to a divalent metal cation. Residues 267–269 (DIG), 272–276 (YPDTD), 343–346 (TTAE), F350, and R353 contribute to the 4-CDP-2-C-methyl-D-erythritol 2-phosphate site.

In the N-terminal section; belongs to the IspD/TarI cytidylyltransferase family. IspD subfamily. The protein in the C-terminal section; belongs to the IspF family. A divalent metal cation serves as cofactor.

It catalyses the reaction 2-C-methyl-D-erythritol 4-phosphate + CTP + H(+) = 4-CDP-2-C-methyl-D-erythritol + diphosphate. The catalysed reaction is 4-CDP-2-C-methyl-D-erythritol 2-phosphate = 2-C-methyl-D-erythritol 2,4-cyclic diphosphate + CMP. Its pathway is isoprenoid biosynthesis; isopentenyl diphosphate biosynthesis via DXP pathway; isopentenyl diphosphate from 1-deoxy-D-xylulose 5-phosphate: step 2/6. The protein operates within isoprenoid biosynthesis; isopentenyl diphosphate biosynthesis via DXP pathway; isopentenyl diphosphate from 1-deoxy-D-xylulose 5-phosphate: step 4/6. Functionally, bifunctional enzyme that catalyzes the formation of 4-diphosphocytidyl-2-C-methyl-D-erythritol from CTP and 2-C-methyl-D-erythritol 4-phosphate (MEP) (IspD), and catalyzes the conversion of 4-diphosphocytidyl-2-C-methyl-D-erythritol 2-phosphate (CDP-ME2P) to 2-C-methyl-D-erythritol 2,4-cyclodiphosphate (ME-CPP) with a corresponding release of cytidine 5-monophosphate (CMP) (IspF). This is Bifunctional enzyme IspD/IspF from Sulfurovum sp. (strain NBC37-1).